Consider the following 515-residue polypeptide: Probable cytosol aminopeptidase (515 aa).

Lys-277 and Asp-282 together coordinate Mn(2+). The active site involves Lys-289. Mn(2+) contacts are provided by Asp-300, Asp-359, and Glu-361. Arg-363 is a catalytic residue.

The protein belongs to the peptidase M17 family. Requires Mn(2+) as cofactor.

Its subcellular location is the cytoplasm. It carries out the reaction Release of an N-terminal amino acid, Xaa-|-Yaa-, in which Xaa is preferably Leu, but may be other amino acids including Pro although not Arg or Lys, and Yaa may be Pro. Amino acid amides and methyl esters are also readily hydrolyzed, but rates on arylamides are exceedingly low.. The catalysed reaction is Release of an N-terminal amino acid, preferentially leucine, but not glutamic or aspartic acids.. Its function is as follows. Presumably involved in the processing and regular turnover of intracellular proteins. Catalyzes the removal of unsubstituted N-terminal amino acids from various peptides. The protein is Probable cytosol aminopeptidase of Streptomyces griseus subsp. griseus (strain JCM 4626 / CBS 651.72 / NBRC 13350 / KCC S-0626 / ISP 5235).